A 206-amino-acid polypeptide reads, in one-letter code: Ion-translocating oxidoreductase complex subunit G (206 aa).

A helical membrane pass occupies residues 9-29 (GITLALFAAGSTGLTAAINQM). At Thr-174 the chain carries FMN phosphoryl threonine.

The protein belongs to the RnfG family. In terms of assembly, the complex is composed of six subunits: RsxA, RsxB, RsxC, RsxD, RsxE and RsxG. Requires FMN as cofactor.

It localises to the cell inner membrane. In terms of biological role, part of a membrane-bound complex that couples electron transfer with translocation of ions across the membrane. Required to maintain the reduced state of SoxR. In Escherichia coli O157:H7, this protein is Ion-translocating oxidoreductase complex subunit G.